Reading from the N-terminus, the 141-residue chain is Large ribosomal subunit protein uL16 (141 aa).

It belongs to the universal ribosomal protein uL16 family. In terms of assembly, part of the 50S ribosomal subunit.

Its function is as follows. Binds 23S rRNA and is also seen to make contacts with the A and possibly P site tRNAs. The chain is Large ribosomal subunit protein uL16 from Campylobacter jejuni subsp. jejuni serotype O:6 (strain 81116 / NCTC 11828).